A 279-amino-acid chain; its full sequence is Inhibitor of growth protein 1 (279 aa).

Residues 115-206 (AHQDISDGTG…EASPADLPID (92 aa)) are disordered. Lys135 is covalently cross-linked (Glycyl lysine isopeptide (Lys-Gly) (interchain with G-Cter in SUMO2)). Over residues 154–171 (RNNENRENASNNHDHDDI) the composition is skewed to basic and acidic residues. Over residues 179–191 (KKAKTSKKKKRSK) the composition is skewed to basic residues. Residues 210-259 (PTYCLCNQVSYGEMIGCDNDECPIEWFHFSCVGLNHKPKGKWYCPKCRGE) form a PHD-type zinc finger. The Zn(2+) site is built by Cys213, Cys215, Cys226, Cys231, His237, Cys240, Cys253, and Cys256. A PBR region spans residues 262 to 279 (KTMDKALEKSKKERAYNR).

This sequence belongs to the ING family. In terms of assembly, interacts with H3K4me3 and to a lesser extent with H3K4me2. Isoform 2 interacts with RSL1D1. In the adult, widely expressed with highest levels in thymus and testis.

It is found in the nucleus. Functionally, isoform 1 inhibits p53-dependent transcriptional activation and may function as an oncoprotein. Isoform 2 acts as a negative growth regulator by cooperating with p53 in transcriptional activation of p53-responsive genes and may act as a tumor suppressor. The polypeptide is Inhibitor of growth protein 1 (Ing1) (Mus musculus (Mouse)).